The sequence spans 125 residues: S-adenosylmethionine decarboxylase proenzyme (125 aa).

The active-site Schiff-base intermediate with substrate; via pyruvic acid is the serine 71. The residue at position 71 (serine 71) is a Pyruvic acid (Ser); by autocatalysis. The active-site Proton acceptor; for processing activity is the histidine 76. Cysteine 91 acts as the Proton donor; for catalytic activity in catalysis.

It belongs to the prokaryotic AdoMetDC family. Type 1 subfamily. As to quaternary structure, heterotetramer of two alpha and two beta chains arranged as a dimer of alpha/beta heterodimers. Pyruvate is required as a cofactor. Is synthesized initially as an inactive proenzyme. Formation of the active enzyme involves a self-maturation process in which the active site pyruvoyl group is generated from an internal serine residue via an autocatalytic post-translational modification. Two non-identical subunits are generated from the proenzyme in this reaction, and the pyruvate is formed at the N-terminus of the alpha chain, which is derived from the carboxyl end of the proenzyme. The post-translation cleavage follows an unusual pathway, termed non-hydrolytic serinolysis, in which the side chain hydroxyl group of the serine supplies its oxygen atom to form the C-terminus of the beta chain, while the remainder of the serine residue undergoes an oxidative deamination to produce ammonia and the pyruvoyl group blocking the N-terminus of the alpha chain.

It catalyses the reaction S-adenosyl-L-methionine + H(+) = S-adenosyl 3-(methylsulfanyl)propylamine + CO2. The protein operates within amine and polyamine biosynthesis; S-adenosylmethioninamine biosynthesis; S-adenosylmethioninamine from S-adenosyl-L-methionine: step 1/1. Functionally, catalyzes the decarboxylation of S-adenosylmethionine to S-adenosylmethioninamine (dcAdoMet), the propylamine donor required for the synthesis of the polyamines spermine and spermidine from the diamine putrescine. The polypeptide is S-adenosylmethionine decarboxylase proenzyme (Pyrobaculum arsenaticum (strain DSM 13514 / JCM 11321 / PZ6)).